Here is a 124-residue protein sequence, read N- to C-terminus: Fluoride-specific ion channel FluC (124 aa).

4 helical membrane-spanning segments follow: residues 4–24, 35–55, 67–87, and 100–120; these read FVLV…LSGV, YGTV…WGIL, LLLL…TYEG, and ALYI…GAGL. Gly-75 and Thr-78 together coordinate Na(+).

The protein belongs to the fluoride channel Fluc/FEX (TC 1.A.43) family.

It localises to the cell inner membrane. The catalysed reaction is fluoride(in) = fluoride(out). Na(+) is not transported, but it plays an essential structural role and its presence is essential for fluoride channel function. Fluoride-specific ion channel. Important for reducing fluoride concentration in the cell, thus reducing its toxicity. This chain is Fluoride-specific ion channel FluC, found in Nitratidesulfovibrio vulgaris (strain ATCC 29579 / DSM 644 / CCUG 34227 / NCIMB 8303 / VKM B-1760 / Hildenborough) (Desulfovibrio vulgaris).